The following is a 447-amino-acid chain: Pentatricopeptide repeat-containing protein At3g53170 (447 aa).

10 PPR repeats span residues 93–127, 128–158, 164–198, 199–233, 235–269, 270–304, 305–339, 340–374, 375–409, and 410–444; these read RCKT…GLKP, TIDV…MKSV, DVFT…GVGC, STVT…GDSL, DVCT…GVQP, DITT…FFSL, TTVT…GVKP, NSIT…DVVL, DTPF…KCKP, and DKIT…GENL.

This sequence belongs to the PPR family. P subfamily.

The sequence is that of Pentatricopeptide repeat-containing protein At3g53170 from Arabidopsis thaliana (Mouse-ear cress).